A 260-amino-acid chain; its full sequence is Thymidylate synthase (260 aa).

Arginine 21 contacts dUMP. Residue histidine 51 coordinates (6R)-5,10-methylene-5,6,7,8-tetrahydrofolate. 122-123 serves as a coordination point for dUMP; it reads RR. Residue cysteine 142 is the Nucleophile of the active site. DUMP is bound by residues 162-165, asparagine 173, and 203-205; these read RSAD and HLY. Aspartate 165 contacts (6R)-5,10-methylene-5,6,7,8-tetrahydrofolate. (6R)-5,10-methylene-5,6,7,8-tetrahydrofolate is bound at residue alanine 259.

The protein belongs to the thymidylate synthase family. Bacterial-type ThyA subfamily. As to quaternary structure, homodimer.

The protein localises to the cytoplasm. It carries out the reaction dUMP + (6R)-5,10-methylene-5,6,7,8-tetrahydrofolate = 7,8-dihydrofolate + dTMP. It participates in pyrimidine metabolism; dTTP biosynthesis. Functionally, catalyzes the reductive methylation of 2'-deoxyuridine-5'-monophosphate (dUMP) to 2'-deoxythymidine-5'-monophosphate (dTMP) while utilizing 5,10-methylenetetrahydrofolate (mTHF) as the methyl donor and reductant in the reaction, yielding dihydrofolate (DHF) as a by-product. This enzymatic reaction provides an intracellular de novo source of dTMP, an essential precursor for DNA biosynthesis. The sequence is that of Thymidylate synthase from Methylococcus capsulatus (strain ATCC 33009 / NCIMB 11132 / Bath).